Reading from the N-terminus, the 65-residue chain is Large ribosomal subunit protein bL35 (65 aa).

Basic residues predominate over residues 1 to 16 (MPKMKTKSSAKKRFKV). Residues 1–26 (MPKMKTKSSAKKRFKVRSSGGIKRSQ) are disordered.

It belongs to the bacterial ribosomal protein bL35 family.

The protein is Large ribosomal subunit protein bL35 of Azoarcus sp. (strain BH72).